We begin with the raw amino-acid sequence, 88 residues long: LYR motif-containing protein 2 (88 aa).

The N-terminal 19 residues, 1–19, are a transit peptide targeting the mitochondrion; the sequence is MAASRLPPATLTLKQFVRR.

Belongs to the complex I LYR family.

The protein localises to the mitochondrion. Its function is as follows. Involved in efficient integration of the N-module into mitochondrial respiratory chain complex I. The protein is LYR motif-containing protein 2 (LYRM2) of Homo sapiens (Human).